The following is a 393-amino-acid chain: Putative mitochondrial cysteine synthase (393 aa).

A helical transmembrane segment spans residues 12–31 (LAWRECISIASVLIGAYASY). K86 is subject to N6-(pyridoxal phosphate)lysine. Pyridoxal 5'-phosphate-binding positions include 230 to 234 (GTGGT) and S338.

Belongs to the cysteine synthase/cystathionine beta-synthase family. It depends on pyridoxal 5'-phosphate as a cofactor.

The protein localises to the mitochondrion. It is found in the mitochondrion outer membrane. The catalysed reaction is O-acetyl-L-serine + hydrogen sulfide = L-cysteine + acetate. Putative cysteine synthase that catalyzes the conversion of O-acetyl-L-serine (OAS) into cysteine, the last step in the cysteine biosynthesis pathway. However, this CS-like protein is unlikely to function in cysteine biosynthesis. It seems that in S.cerevisiae cysteine biosynthesis occurs exclusively through the cystathionine pathway and not via direct incorporation of sulfur into OAS. The chain is Putative mitochondrial cysteine synthase from Saccharomyces cerevisiae (strain ATCC 204508 / S288c) (Baker's yeast).